Reading from the N-terminus, the 1072-residue chain is PWWP domain-containing protein 1 (1072 aa).

Positions 21 to 133 (DSIQDPKVTP…ADEKELDLGL (113 aa)) are disordered. The span at 25 to 38 (DPKVTPDDTVVDSS) shows a compositional bias: low complexity. Over residues 66–77 (RVLESERSEKDG) the composition is skewed to basic and acidic residues. Residues 96–128 (KDDESSEVKEEEEEEDGSDDQSSELGSEADEKE) are compositionally biased toward acidic residues. Residues 173–234 (VGDLVWGKVK…PAELIPFEPN (62 aa)) form the PWWP domain. The interval 365–387 (KSPRSSVSTLEPHNRAPPRAPLS) is disordered. The span at 366-375 (SPRSSVSTLE) shows a compositional bias: polar residues. A Nuclear localization signal 1 motif is present at residues 402–409 (SKKPTKVK). 4 disordered regions span residues 486 to 619 (AIPG…GEAG), 681 to 738 (LSVS…KTNQ), 871 to 931 (KAEP…NGNR), and 944 to 973 (ENSSKANTEPPQVTMTLNRNSGPSSSSSSV). Residues 498–526 (SLDEEKGLAEKSKERMEERAAVLPEHGKS) show a composition bias toward basic and acidic residues. Positions 545 to 568 (AGSSLQPLLESHTSASEGKSSTGS) are enriched in polar residues. 3 consecutive short sequence motifs (nuclear localization signal) follow at residues 596–603 (KKKKKEPD), 705–712 (VKRTEDPS), and 733–740 (LKKTNQLK). Over residues 706 to 729 (KRTEDPSKAGKKRLSSDRQDEIPS) the composition is skewed to basic and acidic residues. Positions 871-880 (KAEPREPENT) are enriched in basic and acidic residues. Over residues 897-906 (LHQPTLPPPN) the composition is skewed to pro residues. The span at 921–930 (SSSSNNGNGN) shows a compositional bias: low complexity. The span at 947–966 (SKANTEPPQVTMTLNRNSGP) shows a compositional bias: polar residues.

The protein belongs to the PDP family. Interacts with MSI4/FVE. Component of the PRC2 (polycomb repressive complex 2) complex which regulates histone methylation on histone H3K27.

The protein resides in the nucleus. Its function is as follows. Together with PDP2, PDP3 and PDP6, interacts with MSI4/FVE and MSI5 to suppress FLC, MAF4 and MAF5 expression by regulating the function of the PRC2 complex and modulating H3K27me3 level, thereby promoting flowering. In Arabidopsis thaliana (Mouse-ear cress), this protein is PWWP domain-containing protein 1.